The sequence spans 22 residues: Chymotrypsin inhibitor (22 aa).

Positions 1–22 are disordered; sequence FDESFGFQGPSTYEKTPLGEPA.

As to expression, hemolymph.

The protein localises to the secreted. It is found in the extracellular space. Functionally, inhibits chymotrypsin stoichiometrically. Also inhibits porcine pancreatic elastase and trypsin. This is Chymotrypsin inhibitor from Mythimna unipuncta (Armyworm moth).